The following is a 429-amino-acid chain: Serine hydroxymethyltransferase (429 aa).

Residues Leu-126 and 130 to 132 each bind (6S)-5,6,7,8-tetrahydrofolate; that span reads GHL. Lys-235 carries the N6-(pyridoxal phosphate)lysine modification. 359–361 serves as a coordination point for (6S)-5,6,7,8-tetrahydrofolate; sequence SPF.

This sequence belongs to the SHMT family. Homodimer. The cofactor is pyridoxal 5'-phosphate.

It is found in the cytoplasm. It carries out the reaction (6R)-5,10-methylene-5,6,7,8-tetrahydrofolate + glycine + H2O = (6S)-5,6,7,8-tetrahydrofolate + L-serine. Its pathway is one-carbon metabolism; tetrahydrofolate interconversion. The protein operates within amino-acid biosynthesis; glycine biosynthesis; glycine from L-serine: step 1/1. Functionally, catalyzes the reversible interconversion of serine and glycine with tetrahydrofolate (THF) serving as the one-carbon carrier. This reaction serves as the major source of one-carbon groups required for the biosynthesis of purines, thymidylate, methionine, and other important biomolecules. Also exhibits THF-independent aldolase activity toward beta-hydroxyamino acids, producing glycine and aldehydes, via a retro-aldol mechanism. The sequence is that of Serine hydroxymethyltransferase from Prochlorococcus marinus (strain MIT 9313).